An 893-amino-acid polypeptide reads, in one-letter code: Probable disease resistance protein At1g62630 (893 aa).

Positions 24–68 (GSYTHNLEKNLVALETTMEELKAKRDDLLRRLKREEDRGLQRLSE) form a coiled coil. Residues 136 to 440 (TEQASTSAFE…CEEIIDGSEG (305 aa)) enclose the NB-ARC domain. Residue 179-186 (GMGGVGKT) coordinates ATP. LRR repeat units follow at residues 516 to 537 (VVRR…YECM), 538 to 559 (ELTT…SEIK), 571 to 593 (KLAV…ISNL), 595 to 617 (SLKY…QELK), 618 to 640 (KIIH…SSLH), and 641 to 663 (NLKV…KELE).

It belongs to the disease resistance NB-LRR family.

Probable disease resistance protein. The protein is Probable disease resistance protein At1g62630 of Arabidopsis thaliana (Mouse-ear cress).